Reading from the N-terminus, the 48-residue chain is Fimbrial assembly protein, serogroup F1 (48 aa).

In Dichelobacter nodosus (Bacteroides nodosus), this protein is Fimbrial assembly protein, serogroup F1 (fimB).